A 233-amino-acid polypeptide reads, in one-letter code: Ubiquitin carboxyl-terminal hydrolase isozyme L4 (233 aa).

The 228-residue stretch at 5–232 folds into the UCH catalytic domain; it reads RWLPLEANPE…LRFNAIALSA (228 aa). Residues 8–13 form an interaction with ubiquitin region; the sequence is PLEANP. Cys95 functions as the Nucleophile in the catalytic mechanism. Ser133 carries the phosphoserine modification. The Proton donor role is filled by His172. Residues 222 to 227 are interaction with ubiquitin; it reads ELRFNA.

The protein belongs to the peptidase C12 family. In terms of tissue distribution, expressed in various tissues at low level.

It is found in the cytoplasm. It carries out the reaction Thiol-dependent hydrolysis of ester, thioester, amide, peptide and isopeptide bonds formed by the C-terminal Gly of ubiquitin (a 76-residue protein attached to proteins as an intracellular targeting signal).. Functionally, ubiquitin-protein hydrolase is involved both in the processing of ubiquitin precursors and of ubiquitinated proteins. This enzyme is a thiol protease that recognizes and hydrolyzes a peptide bond at the C-terminal glycine of ubiquitin. The sequence is that of Ubiquitin carboxyl-terminal hydrolase isozyme L4 (Uchl4) from Mus musculus (Mouse).